We begin with the raw amino-acid sequence, 307 residues long: Ribosomal protein L11 methyltransferase (307 aa).

S-adenosyl-L-methionine-binding residues include Thr162, Gly183, Asp205, and Asn244.

Belongs to the methyltransferase superfamily. PrmA family.

It localises to the cytoplasm. It carries out the reaction L-lysyl-[protein] + 3 S-adenosyl-L-methionine = N(6),N(6),N(6)-trimethyl-L-lysyl-[protein] + 3 S-adenosyl-L-homocysteine + 3 H(+). Functionally, methylates ribosomal protein L11. The protein is Ribosomal protein L11 methyltransferase of Bordetella bronchiseptica (strain ATCC BAA-588 / NCTC 13252 / RB50) (Alcaligenes bronchisepticus).